An 819-amino-acid polypeptide reads, in one-letter code: Leucine--tRNA ligase (819 aa).

The 'HIGH' region signature appears at 42 to 52 (PYPSGRLHMGH). The 'KMSKS' region motif lies at 577-581 (KMSKS). K580 contacts ATP.

It belongs to the class-I aminoacyl-tRNA synthetase family.

Its subcellular location is the cytoplasm. The enzyme catalyses tRNA(Leu) + L-leucine + ATP = L-leucyl-tRNA(Leu) + AMP + diphosphate. This chain is Leucine--tRNA ligase, found in Saccharophagus degradans (strain 2-40 / ATCC 43961 / DSM 17024).